Consider the following 3268-residue polypeptide: E3 ubiquitin-protein ligase TOM1 (3268 aa).

S1890 carries the phosphoserine modification. Disordered regions lie at residues 1941–2023 (VFSD…EDDA) and 2038–2083 (GYDV…MGDS). Residues 1942–1955 (FSDEDDDMGEEDAD) show a composition bias toward acidic residues. Positions 1967-1976 (SSEMQSSTAD) are enriched in polar residues. Acidic residues-rich tracts occupy residues 1978–1988 (TDVDYEVDDAD), 2042–2053 (DLSDYDVDESDW), and 2063–2074 (SDEDSESSEDEP). T2096 is modified (phosphothreonine). S2119, S2376, S2406, and S2418 each carry phosphoserine. The span at 2416 to 2426 (DVSNNDEEVEN) shows a compositional bias: acidic residues. The segment at 2416–2443 (DVSNNDEEVENGLDHGNSNDRNNADPEK) is disordered. In terms of domain architecture, HECT spans 2932 to 3268 (TNDEIKNSKL…NEGHEGFGLA (337 aa)). Residue C3235 is the Glycyl thioester intermediate of the active site.

This sequence belongs to the UPL family. TOM1/PTR1 subfamily. As to quaternary structure, interacts with the ADA3/NGG1 subunit of the SAGA complex. Interacts with KRR1.

The protein localises to the nucleus. Its subcellular location is the nucleolus. The enzyme catalyses S-ubiquitinyl-[E2 ubiquitin-conjugating enzyme]-L-cysteine + [acceptor protein]-L-lysine = [E2 ubiquitin-conjugating enzyme]-L-cysteine + N(6)-ubiquitinyl-[acceptor protein]-L-lysine.. Its pathway is protein modification; protein ubiquitination. In terms of biological role, probable ubiquitin ligase protein involved in many cellular processes, such as transcription regulation, maintenance of nuclear structure, cell cycle, mRNA export and rRNA maturation. E3 ubiquitin ligase proteins mediate ubiquitination and subsequent proteasomal degradation of target proteins. Involved in transcription regulation by interacting, and probably mediating, ubiquitination of some subunit of the SAGA complex. Required for SPT7 ubiquitination. Participates in mRNA export from the nucleus by regulating the transport of hnRNP proteins. Required for the shuttling of hnRNP protein NAB2, probably by mediating ubiquitination of a protein associated with NAB2. Also required for full induction of the general stress and heat-shock responses. Involved in 18S rRNA maturation by affecting several early steps in the rRNA processing pathway. This is E3 ubiquitin-protein ligase TOM1 (TOM1) from Saccharomyces cerevisiae (strain ATCC 204508 / S288c) (Baker's yeast).